Here is a 306-residue protein sequence, read N- to C-terminus: tRNA dimethylallyltransferase (306 aa).

Residue glycine 9–threonine 16 participates in ATP binding. Threonine 11–threonine 16 lines the substrate pocket. The interval aspartate 34 to glutamine 37 is interaction with substrate tRNA.

Belongs to the IPP transferase family. As to quaternary structure, monomer. It depends on Mg(2+) as a cofactor.

It catalyses the reaction adenosine(37) in tRNA + dimethylallyl diphosphate = N(6)-dimethylallyladenosine(37) in tRNA + diphosphate. Its function is as follows. Catalyzes the transfer of a dimethylallyl group onto the adenine at position 37 in tRNAs that read codons beginning with uridine, leading to the formation of N6-(dimethylallyl)adenosine (i(6)A). The chain is tRNA dimethylallyltransferase from Lactobacillus acidophilus (strain ATCC 700396 / NCK56 / N2 / NCFM).